Here is a 98-residue protein sequence, read N- to C-terminus: Small ribosomal subunit protein uS19c (98 aa).

Belongs to the universal ribosomal protein uS19 family.

Its subcellular location is the plastid. The protein resides in the chloroplast. In terms of biological role, protein S19 forms a complex with S13 that binds strongly to the 16S ribosomal RNA. The chain is Small ribosomal subunit protein uS19c from Jasminum nudiflorum (Winter jasmine).